The chain runs to 617 residues: Dihydroxy-acid dehydratase (617 aa).

Asp-81 is a binding site for Mg(2+). Cys-122 is a [2Fe-2S] cluster binding site. Mg(2+)-binding residues include Asp-123 and Lys-124. An N6-carboxylysine modification is found at Lys-124. Residue Cys-195 participates in [2Fe-2S] cluster binding. A Mg(2+)-binding site is contributed by Glu-490. Ser-516 functions as the Proton acceptor in the catalytic mechanism.

This sequence belongs to the IlvD/Edd family. In terms of assembly, homodimer. It depends on [2Fe-2S] cluster as a cofactor. Mg(2+) is required as a cofactor.

The catalysed reaction is (2R)-2,3-dihydroxy-3-methylbutanoate = 3-methyl-2-oxobutanoate + H2O. It carries out the reaction (2R,3R)-2,3-dihydroxy-3-methylpentanoate = (S)-3-methyl-2-oxopentanoate + H2O. It functions in the pathway amino-acid biosynthesis; L-isoleucine biosynthesis; L-isoleucine from 2-oxobutanoate: step 3/4. It participates in amino-acid biosynthesis; L-valine biosynthesis; L-valine from pyruvate: step 3/4. Functionally, functions in the biosynthesis of branched-chain amino acids. Catalyzes the dehydration of (2R,3R)-2,3-dihydroxy-3-methylpentanoate (2,3-dihydroxy-3-methylvalerate) into 2-oxo-3-methylpentanoate (2-oxo-3-methylvalerate) and of (2R)-2,3-dihydroxy-3-methylbutanoate (2,3-dihydroxyisovalerate) into 2-oxo-3-methylbutanoate (2-oxoisovalerate), the penultimate precursor to L-isoleucine and L-valine, respectively. This is Dihydroxy-acid dehydratase from Acidiphilium cryptum (strain JF-5).